Here is a 242-residue protein sequence, read N- to C-terminus: Probable septum site-determining protein MinC (242 aa).

This sequence belongs to the MinC family. In terms of assembly, interacts with MinD and FtsZ.

Cell division inhibitor that blocks the formation of polar Z ring septums. Rapidly oscillates between the poles of the cell to destabilize FtsZ filaments that have formed before they mature into polar Z rings. Prevents FtsZ polymerization. The chain is Probable septum site-determining protein MinC from Thioalkalivibrio sulfidiphilus (strain HL-EbGR7).